Here is a 93-residue protein sequence, read N- to C-terminus: Parbolysin P3 (93 aa).

3 disulfides stabilise this stretch: cysteine 16–cysteine 37, cysteine 22–cysteine 33, and cysteine 47–cysteine 60.

The protein belongs to the worm cytolysin family. Localized within the skin and proboscis and are most readily isolated from body mucus secretions.

It localises to the secreted. Cytolysin that shows hemolytic activity (on bovine erythrocytes, HC(50)=5.75 mg/ml). This hemolytic activity is completely inhibited by small unilamelar vesicles composed of PC/PG, PC/PI and PC/PS in 1:1 molar ratios (with at least 100 mg/ml concentration). This Parborlasia corrugatus (Antarctic nemertean worm) protein is Parbolysin P3.